The following is a 437-amino-acid chain: MESLLTDKQRSDLETSIFGYVSRLTNDEALLSQLAAVLSQPSGSEPVPADTLKANALLLEKKWLSVIRLQRKVMDLETRLEAAEREASSTHKANGLGAGDPKTWLPKTSRFSLLHKQPVNAVSFHPFHSTLASACEDGNIRIWDYELGEIETTIKAHTRGVLDVDFSQPDTGASRDKSHDKPRADVSHAQPRALLVSCSSDLTIRIWDPQNEYANVKTLTGHDHTISAVKFTASGNHVISASRDKTVRVWSVQSGYCVRTVHGHTDWVKSCAALNEEFIFSAGIDHVTRVSEFVSGDGKMTLLGHEHVIEGVAVYPKSAAGCLAKLDKTSSYFVVSWSRDKTIRVWSSRGDPLLILRGHDNWVRGVVLHPAGRYLVSVSDDKTMRCWDLEQGGRCIRVVDAHGHFVTCVAWAPNDVNGRVRCLVATGGVDGQVKVWQ.

Residues 64-94 (LSVIRLQRKVMDLETRLEAAEREASSTHKAN) adopt a coiled-coil conformation. WD repeat units follow at residues 114–153 (LHKQ…IETT), 156–217 (AHTR…ANVK), 221–260 (GHDH…CVRT), 263–301 (GHTD…GKMT), 304–356 (GHEH…LLIL), 358–397 (GHDN…RCIR), and 401–437 (AHGH…KVWQ). A disordered region spans residues 165–186 (DFSQPDTGASRDKSHDKPRADV). A compositionally biased stretch (basic and acidic residues) spans 173–186 (ASRDKSHDKPRADV).

Belongs to the WD repeat LIS1/nudF family. Self-associates. Interacts with NDL1 and dynein.

It is found in the cytoplasm. It localises to the cytoskeleton. The protein resides in the spindle pole. Its function is as follows. Positively regulates the activity of the minus-end directed microtubule motor protein dynein. Plays a central role in positioning the mitotic spindle at the bud neck during cell division. Targets cytoplasmic dynein to microtubule plus ends, thereby promoting dynein-mediated microtubule sliding along the bud cortex and consequently the movement of the mitotic spindle to the bud neck. The chain is Nuclear distribution protein PAC1 from Yarrowia lipolytica (strain CLIB 122 / E 150) (Yeast).